The primary structure comprises 245 residues: Biosynthetic peptidoglycan transglycosylase (245 aa).

The chain crosses the membrane as a helical span at residues 19–39; it reads IVYAGAVFAAAWLATQLFYFV.

The protein belongs to the glycosyltransferase 51 family.

It is found in the cell inner membrane. The enzyme catalyses [GlcNAc-(1-&gt;4)-Mur2Ac(oyl-L-Ala-gamma-D-Glu-L-Lys-D-Ala-D-Ala)](n)-di-trans,octa-cis-undecaprenyl diphosphate + beta-D-GlcNAc-(1-&gt;4)-Mur2Ac(oyl-L-Ala-gamma-D-Glu-L-Lys-D-Ala-D-Ala)-di-trans,octa-cis-undecaprenyl diphosphate = [GlcNAc-(1-&gt;4)-Mur2Ac(oyl-L-Ala-gamma-D-Glu-L-Lys-D-Ala-D-Ala)](n+1)-di-trans,octa-cis-undecaprenyl diphosphate + di-trans,octa-cis-undecaprenyl diphosphate + H(+). It functions in the pathway cell wall biogenesis; peptidoglycan biosynthesis. Its function is as follows. Peptidoglycan polymerase that catalyzes glycan chain elongation from lipid-linked precursors. This Burkholderia multivorans (strain ATCC 17616 / 249) protein is Biosynthetic peptidoglycan transglycosylase.